Consider the following 163-residue polypeptide: Ribosome maturation factor RimP (163 aa).

Belongs to the RimP family.

Its subcellular location is the cytoplasm. Functionally, required for maturation of 30S ribosomal subunits. The polypeptide is Ribosome maturation factor RimP (Streptococcus thermophilus (strain CNRZ 1066)).